The sequence spans 503 residues: Chromodomain Y-like protein 2 (503 aa).

The Chromo domain maps to 7-67 (YEVERIVDKR…LHLSKDKRVK (61 aa)). Residues 66–177 (VKSGKQAGAS…GNGSHQPDLE (112 aa)) are disordered. Residues 88-98 (RLSHRPLEPGK) show a composition bias toward basic and acidic residues. Residues 101–120 (PSSHKRKRVNSPLSRPKKGS) are compositionally biased toward basic residues. Polar residues predominate over residues 130 to 140 (KTVSYRTTPSG).

Interacts (via chromo domain) with histone H3K9me3.

The protein localises to the nucleus. The polypeptide is Chromodomain Y-like protein 2 (Cdyl2) (Mus musculus (Mouse)).